We begin with the raw amino-acid sequence, 311 residues long: UPF0324 membrane protein VV1_3166 (311 aa).

A run of 10 helical transmembrane segments spans residues 8 to 28 (FIFA…ALVL), 51 to 71 (LLSY…AIAV), 74 to 94 (DGIG…FLVA), 106 to 126 (LISA…APAI), 133 to 153 (IALA…IFPV), 165 to 185 (FGTW…AASA), 197 to 217 (LKLA…ILFA), 228 to 248 (LVLP…DLFP), 256 to 276 (GIFS…GCSI), and 289 to 309 (LIFG…WLLL).

The protein belongs to the UPF0324 family.

The protein resides in the cell membrane. In Vibrio vulnificus (strain CMCP6), this protein is UPF0324 membrane protein VV1_3166.